A 357-amino-acid polypeptide reads, in one-letter code: Ion-translocating oxidoreductase complex subunit D (357 aa).

The next 3 membrane-spanning stretches (helical) occupy residues 35-55, 88-108, and 119-139; these read VWLY…TVLV, LPPW…VVLG, and LFNP…VEMT. FMN phosphoryl threonine is present on Thr-176. The next 5 helical transmembrane spans lie at 209 to 229, 233 to 253, 261 to 281, 295 to 315, and 316 to 336; these read APGS…VYLI, VIAW…ATVF, YADA…FFIA, AVFA…GGYP, and EATA…DHWI.

The protein belongs to the NqrB/RnfD family. The complex is composed of six subunits: RnfA, RnfB, RnfC, RnfD, RnfE and RnfG. The cofactor is FMN.

It is found in the cell inner membrane. Its function is as follows. Part of a membrane-bound complex that couples electron transfer with translocation of ions across the membrane. This is Ion-translocating oxidoreductase complex subunit D from Halorhodospira halophila (strain DSM 244 / SL1) (Ectothiorhodospira halophila (strain DSM 244 / SL1)).